The chain runs to 429 residues: S-adenosylmethionine synthase (429 aa).

Residue histidine 14 participates in ATP binding. Mg(2+) is bound at residue aspartate 16. Glutamate 42 contacts K(+). L-methionine-binding residues include glutamate 55 and glutamine 98. Residues 98-108 (QSADINRGVDR) form a flexible loop region. ATP is bound by residues 165–167 (DAK), 252–253 (KF), aspartate 261, 267–268 (RK), alanine 284, and lysine 288. Aspartate 261 provides a ligand contact to L-methionine. Lysine 292 contributes to the L-methionine binding site.

This sequence belongs to the AdoMet synthase family. In terms of assembly, homotetramer; dimer of dimers. Mg(2+) serves as cofactor. It depends on K(+) as a cofactor.

The protein resides in the cytoplasm. It catalyses the reaction L-methionine + ATP + H2O = S-adenosyl-L-methionine + phosphate + diphosphate. The protein operates within amino-acid biosynthesis; S-adenosyl-L-methionine biosynthesis; S-adenosyl-L-methionine from L-methionine: step 1/1. Functionally, catalyzes the formation of S-adenosylmethionine (AdoMet) from methionine and ATP. The overall synthetic reaction is composed of two sequential steps, AdoMet formation and the subsequent tripolyphosphate hydrolysis which occurs prior to release of AdoMet from the enzyme. This is S-adenosylmethionine synthase from Porphyromonas gingivalis (strain ATCC BAA-308 / W83).